The sequence spans 47 residues: Conotoxin Cal6.18 (47 aa).

An N-terminal signal peptide occupies residues 1-19 (MKLTYVLIVAMLVLVVCRA).

It belongs to the conotoxin O1 superfamily. May contain 3 disulfide bonds. Expressed by the venom duct.

The protein localises to the secreted. Its function is as follows. Probable neurotoxin. The sequence is that of Conotoxin Cal6.18 from Californiconus californicus (California cone).